Reading from the N-terminus, the 468-residue chain is Phosphoglucosamine mutase (468 aa).

The Phosphoserine intermediate role is filled by S112. Mg(2+)-binding residues include S112, D254, D256, and D258. S112 carries the phosphoserine modification.

The protein belongs to the phosphohexose mutase family. Requires Mg(2+) as cofactor. Activated by phosphorylation.

The catalysed reaction is alpha-D-glucosamine 1-phosphate = D-glucosamine 6-phosphate. Functionally, catalyzes the conversion of glucosamine-6-phosphate to glucosamine-1-phosphate. This Prochlorococcus marinus (strain MIT 9303) protein is Phosphoglucosamine mutase.